Here is a 79-residue protein sequence, read N- to C-terminus: Small ribosomal subunit protein uS17 (79 aa).

This sequence belongs to the universal ribosomal protein uS17 family. Part of the 30S ribosomal subunit.

One of the primary rRNA binding proteins, it binds specifically to the 5'-end of 16S ribosomal RNA. The chain is Small ribosomal subunit protein uS17 from Bartonella tribocorum (strain CIP 105476 / IBS 506).